Reading from the N-terminus, the 298-residue chain is 4-hydroxy-tetrahydrodipicolinate synthase (298 aa).

Threonine 51 contacts pyruvate. Catalysis depends on tyrosine 139, which acts as the Proton donor/acceptor. Lysine 167 (schiff-base intermediate with substrate) is an active-site residue. Isoleucine 209 provides a ligand contact to pyruvate.

This sequence belongs to the DapA family. As to quaternary structure, homotetramer; dimer of dimers.

The protein resides in the cytoplasm. It catalyses the reaction L-aspartate 4-semialdehyde + pyruvate = (2S,4S)-4-hydroxy-2,3,4,5-tetrahydrodipicolinate + H2O + H(+). The protein operates within amino-acid biosynthesis; L-lysine biosynthesis via DAP pathway; (S)-tetrahydrodipicolinate from L-aspartate: step 3/4. Catalyzes the condensation of (S)-aspartate-beta-semialdehyde [(S)-ASA] and pyruvate to 4-hydroxy-tetrahydrodipicolinate (HTPA). The polypeptide is 4-hydroxy-tetrahydrodipicolinate synthase (Haemophilus influenzae (strain PittGG)).